The chain runs to 72 residues: Translation initiation factor IF-1 (72 aa).

Positions 1 to 72 (MAKEDVIEMQ…SKGRIVFRAR (72 aa)) constitute an S1-like domain.

It belongs to the IF-1 family. Component of the 30S ribosomal translation pre-initiation complex which assembles on the 30S ribosome in the order IF-2 and IF-3, IF-1 and N-formylmethionyl-tRNA(fMet); mRNA recruitment can occur at any time during PIC assembly.

It localises to the cytoplasm. Its function is as follows. One of the essential components for the initiation of protein synthesis. Stabilizes the binding of IF-2 and IF-3 on the 30S subunit to which N-formylmethionyl-tRNA(fMet) subsequently binds. Helps modulate mRNA selection, yielding the 30S pre-initiation complex (PIC). Upon addition of the 50S ribosomal subunit IF-1, IF-2 and IF-3 are released leaving the mature 70S translation initiation complex. The chain is Translation initiation factor IF-1 from Vibrio cholerae serotype O1 (strain ATCC 39541 / Classical Ogawa 395 / O395).